The chain runs to 514 residues: Na(+)/H(+) antiporter NhaB (514 aa).

The next 12 membrane-spanning stretches (helical) occupy residues 23 to 43 (LALL…PFIA), 52 to 72 (IFTL…LLAI), 97 to 117 (LLLM…LFIF), 120 to 140 (LLLS…AAAF), 144 to 164 (FLDA…FYGI), 202 to 222 (LMMH…VGEP), 238 to 258 (FFLR…LTCL), 303 to 323 (ALIG…VGLI), 353 to 373 (FTAL…QSLF), 391 to 411 (LFYL…VGTI), 447 to 467 (ATPN…APLI), and 475 to 495 (VWMA…CVEF).

This sequence belongs to the NhaB Na(+)/H(+) (TC 2.A.34) antiporter family.

Its subcellular location is the cell inner membrane. It carries out the reaction 2 Na(+)(in) + 3 H(+)(out) = 2 Na(+)(out) + 3 H(+)(in). Na(+)/H(+) antiporter that extrudes sodium in exchange for external protons. The protein is Na(+)/H(+) antiporter NhaB of Escherichia fergusonii (strain ATCC 35469 / DSM 13698 / CCUG 18766 / IAM 14443 / JCM 21226 / LMG 7866 / NBRC 102419 / NCTC 12128 / CDC 0568-73).